Consider the following 383-residue polypeptide: Phosphoenolpyruvate/phosphate translocator 2, chloroplastic (383 aa).

Residues 1–55 (MFALTFLNPNPRLPSPLFLAKSTPESALSRRSRAFSSSNSYPWRPNLRFNGFKLK) constitute a chloroplast transit peptide. 8 helical membrane passes run 76–96 (GLKL…YNIF), 108–128 (ATVT…MWLL), 143–163 (VIVQ…VSLG), 179–199 (FFTV…WIVC), 210–232 (LASF…SNVT), 253–273 (INLF…LAIL), 299–319 (IMSL…YMIL), and 350–369 (VSPL…YLYS). An EamA domain is found at 93–212 (YNIFNKQVLR…PIVAGVSLAS (120 aa)).

This sequence belongs to the TPT transporter family. PPT (TC 2.A.7.9) subfamily. Widely expressed in leaves throughout development. In flowers, expressed in sepals and pistils.

Its subcellular location is the plastid. It is found in the chloroplast membrane. Phosphoenolpyruvate/phosphate translocator that transports phosphoenolpyruvate (PEP), 2-phosphoglycerate and 3-phosphoglycerate. The sequence is that of Phosphoenolpyruvate/phosphate translocator 2, chloroplastic (PPT2) from Arabidopsis thaliana (Mouse-ear cress).